The sequence spans 311 residues: Cell division protein ZipA (311 aa).

The Periplasmic segment spans residues 1-6 (MENLQL). Residues 7–27 (VLFVLGAIAIIAVLVHGFWSI) form a helical membrane-spanning segment. Residues 28–311 (RKQQPKSLKE…YLQRIRAQLD (284 aa)) lie on the Cytoplasmic side of the membrane. The segment at 46–114 (DQASVRDSQG…FALSDEPVQR (69 aa)) is disordered. 2 stretches are compositionally biased toward basic and acidic residues: residues 62–83 (GEVRVRKEVPATDRQEKEDKPV) and 94–103 (RDVEDSRHEQ).

Belongs to the ZipA family. Interacts with FtsZ via their C-terminal domains.

The protein localises to the cell inner membrane. In terms of biological role, essential cell division protein that stabilizes the FtsZ protofilaments by cross-linking them and that serves as a cytoplasmic membrane anchor for the Z ring. Also required for the recruitment to the septal ring of downstream cell division proteins. This chain is Cell division protein ZipA, found in Shewanella woodyi (strain ATCC 51908 / MS32).